Here is a 124-residue protein sequence, read N- to C-terminus: MLTEFKQFIARGNVIDLAVGVIIGAAFTAIVQSLVKNLINPLIGIFVGKIDLSNLVFKAGDATFKYGSFINSVINFLIISFVVFLIVKAVNKITKKEEEEKPDTPTETDYLKEIRDLLKEKETK.

The next 3 helical transmembrane spans lie at 14 to 34, 37 to 57, and 67 to 87; these read VIDL…VQSL, NLIN…NLVF, and GSFI…FLIV.

The protein belongs to the MscL family. Homopentamer.

It localises to the cell membrane. Channel that opens in response to stretch forces in the membrane lipid bilayer. May participate in the regulation of osmotic pressure changes within the cell. This chain is Large-conductance mechanosensitive channel, found in Lactobacillus acidophilus (strain ATCC 700396 / NCK56 / N2 / NCFM).